The sequence spans 626 residues: (+)-3-carene synthase 1, chloroplastic (626 aa).

The N-terminal 45 residues, 1-45 (MSLISAVPLASSCVSKSLISSVREHTALRRAIATLQMSRRGKSVA), are a transit peptide targeting the chloroplast. The Mg(2+) site is built by D377, D381, and D529. Positions 377 to 381 (DDMYD) match the DDXXD motif motif.

It belongs to the terpene synthase family. Tpsd subfamily. Mg(2+) serves as cofactor. Requires Mn(2+) as cofactor.

Its subcellular location is the plastid. The protein resides in the chloroplast. It catalyses the reaction (2E)-geranyl diphosphate = (+)-car-3-ene + diphosphate. The catalysed reaction is (2E)-geranyl diphosphate = terpinolene + diphosphate. It functions in the pathway terpene metabolism; oleoresin biosynthesis. It participates in secondary metabolite biosynthesis; terpenoid biosynthesis. Its function is as follows. Monoterpene synthase (TPS) involved in the biosynthesis of monoterpene natural products included in conifer oleoresin secretions and volatile emissions; these compounds contribute to biotic and abiotic stress defense against herbivores and pathogens. Catalyzes the conversion of (2E)-geranyl diphosphate (GPP) to (+)-car-3-ene and, to a lower extent, to terpinolene. The protein is (+)-3-carene synthase 1, chloroplastic of Pinus contorta (Shore pine).